The chain runs to 323 residues: Ribose-phosphate pyrophosphokinase (323 aa).

ATP is bound by residues 38–40 and 96–97; these read DGE and RQ. The Mg(2+) site is built by His-130 and Asp-170. Residue Lys-193 is part of the active site. Residues Arg-195, Asp-219, and 223-227 each bind D-ribose 5-phosphate; that span reads DTAGT.

This sequence belongs to the ribose-phosphate pyrophosphokinase family. Class I subfamily. In terms of assembly, homohexamer. Mg(2+) is required as a cofactor.

The protein localises to the cytoplasm. The catalysed reaction is D-ribose 5-phosphate + ATP = 5-phospho-alpha-D-ribose 1-diphosphate + AMP + H(+). The protein operates within metabolic intermediate biosynthesis; 5-phospho-alpha-D-ribose 1-diphosphate biosynthesis; 5-phospho-alpha-D-ribose 1-diphosphate from D-ribose 5-phosphate (route I): step 1/1. Functionally, involved in the biosynthesis of the central metabolite phospho-alpha-D-ribosyl-1-pyrophosphate (PRPP) via the transfer of pyrophosphoryl group from ATP to 1-hydroxyl of ribose-5-phosphate (Rib-5-P). The protein is Ribose-phosphate pyrophosphokinase of Chlorobaculum tepidum (strain ATCC 49652 / DSM 12025 / NBRC 103806 / TLS) (Chlorobium tepidum).